The primary structure comprises 388 residues: F-box protein At3g49510 (388 aa).

One can recognise an F-box domain in the interval 1 to 47 (MTTISDLSDDLVGDILSRVPFTSLISVRSTCKKWNALSKNQIFGRKT).

This Arabidopsis thaliana (Mouse-ear cress) protein is F-box protein At3g49510.